Reading from the N-terminus, the 319-residue chain is Tyrosine phosphatase-like protein N3 (319 aa).

The region spanning 7–285 is the Tyrosine-protein phosphatase domain; the sequence is SNLSIHEFWR…LIINKILLHS (279 aa).

This sequence belongs to the protein-tyrosine phosphatase family.

This is Tyrosine phosphatase-like protein N3 (N7) from Microplitis demolitor bracovirus (isolate Webb) (MdBV).